Consider the following 400-residue polypeptide: Arrestin, lateral eye (400 aa).

Belongs to the arrestin family. Post-translationally, phosphorylated.

Plays an important role in the photoreceptor transduction. The protein is Arrestin, lateral eye of Limulus polyphemus (Atlantic horseshoe crab).